Here is a 239-residue protein sequence, read N- to C-terminus: MPIKKPCLKLNLDSLNVVRSEIPQMLSANERLKNNFNILYNQIRQYPAYYFKVASNVPNYSDICQFFSVMYQGFQIVNHSGDVFIHACRENPQSKGDFVGDKFHISIAREQVPLAFQILSGLLFSEDSPIDKWKITDMNRVSQQSRVGIGAQFTLYVKSDQECSQYSALLLHKIRQFIMCLESNLLRSKIAPGEYPASDVRPEDWKYVSYRNELRSDRDGSERQEQMLREEPFYRLMIE.

H104 functions as the Proton donor in the catalytic mechanism. K134 functions as the Proton acceptor in the catalytic mechanism.

It belongs to the phosphothreonine lyase family.

Its subcellular location is the secreted. Catalyzes the removal of the phosphate group from the phosphothreonine in the mitogen-activated protein kinases such as MAPK2/ERK2, MAPK3/ERK1, MAPK8 and MAPK14 in an irreversible reaction, thus preventing the downstream phosphorylation of histone H3. This epigenetic modification results in inhibition of the transcription of a specific subset of pro-inflammatory genes, and ultimately to a reduced immune response against the invading pathogen. The diminished immune response enhances the bacterium's ability to disseminate and multiply within the host. In Shigella sonnei (strain Ss046), this protein is Phosphothreonine lyase OspF (ospF).